A 277-amino-acid chain; its full sequence is Large ribosomal subunit protein uL2 (277 aa).

The disordered stretch occupies residues 223–264 (VAMNPVDHPHGGGEGKTAAGRHPVSPWGTPSKGSRTRRNKRT).

This sequence belongs to the universal ribosomal protein uL2 family. Part of the 50S ribosomal subunit. Forms a bridge to the 30S subunit in the 70S ribosome.

In terms of biological role, one of the primary rRNA binding proteins. Required for association of the 30S and 50S subunits to form the 70S ribosome, for tRNA binding and peptide bond formation. It has been suggested to have peptidyltransferase activity; this is somewhat controversial. Makes several contacts with the 16S rRNA in the 70S ribosome. The chain is Large ribosomal subunit protein uL2 from Nitrosomonas eutropha (strain DSM 101675 / C91 / Nm57).